Reading from the N-terminus, the 392-residue chain is uncharacterized protein (392 aa).

This sequence belongs to the peptidase M24 family.

This is an uncharacterized protein from Sinorhizobium fredii (strain NBRC 101917 / NGR234).